Consider the following 156-residue polypeptide: Rhombotin-1 (156 aa).

2 LIM zinc-binding domains span residues 22 to 84 (KGCA…LFGT) and 86 to 148 (GNCA…GHLN).

As to expression, expressed in the brain and not in the thymus.

Its subcellular location is the nucleus. May be involved in gene regulation within neural lineage cells potentially by direct DNA binding or by binding to other transcription factors. This chain is Rhombotin-1 (Lmo1), found in Mus musculus (Mouse).